A 241-amino-acid polypeptide reads, in one-letter code: Uridylate kinase (241 aa).

Position 15-18 (15-18) interacts with ATP; the sequence is KLSG. The tract at residues 23–28 is involved in allosteric activation by GTP; it reads GTEGFG. Gly-57 lines the UMP pocket. ATP-binding residues include Gly-58 and Arg-62. UMP is bound by residues Asp-77 and 138–145; that span reads TGNPFFTT. Thr-165, Phe-171, and Asp-174 together coordinate ATP.

This sequence belongs to the UMP kinase family. As to quaternary structure, homohexamer.

It localises to the cytoplasm. The enzyme catalyses UMP + ATP = UDP + ADP. Its pathway is pyrimidine metabolism; CTP biosynthesis via de novo pathway; UDP from UMP (UMPK route): step 1/1. Allosterically activated by GTP. Inhibited by UTP. Catalyzes the reversible phosphorylation of UMP to UDP. The protein is Uridylate kinase of Shigella dysenteriae serotype 1 (strain Sd197).